The primary structure comprises 376 residues: Actin, cytoplasmic (376 aa).

This sequence belongs to the actin family.

Its subcellular location is the cytoplasm. It is found in the cytoskeleton. It carries out the reaction ATP + H2O = ADP + phosphate + H(+). Its function is as follows. Actins are highly conserved proteins that are involved in various types of cell motility and are ubiquitously expressed in all eukaryotic cells. The protein is Actin, cytoplasmic of Tetrahymena pyriformis.